Here is a 612-residue protein sequence, read N- to C-terminus: Chaperone protein DnaK (612 aa).

Thr-173 bears the Phosphothreonine; by autocatalysis mark. The interval 576 to 612 (AAKAQQAEGGANAEGKKADDNVVDAEYEEVKDDETKK) is disordered. A compositionally biased stretch (low complexity) spans 578–588 (KAQQAEGGANA). Residues 596 to 612 (NVVDAEYEEVKDDETKK) show a composition bias toward acidic residues.

Belongs to the heat shock protein 70 family.

Functionally, acts as a chaperone. This chain is Chaperone protein DnaK, found in Bacillus velezensis (strain DSM 23117 / BGSC 10A6 / LMG 26770 / FZB42) (Bacillus amyloliquefaciens subsp. plantarum).